Reading from the N-terminus, the 122-residue chain is Large ribosomal subunit protein uL14 (122 aa).

Belongs to the universal ribosomal protein uL14 family. In terms of assembly, part of the 50S ribosomal subunit. Forms a cluster with proteins L3 and L19. In the 70S ribosome, L14 and L19 interact and together make contacts with the 16S rRNA in bridges B5 and B8.

In terms of biological role, binds to 23S rRNA. Forms part of two intersubunit bridges in the 70S ribosome. The polypeptide is Large ribosomal subunit protein uL14 (Lysinibacillus sphaericus (strain C3-41)).